Consider the following 141-residue polypeptide: DUF35 domain-containing scaffold protein (141 aa).

Zn(2+) contacts are provided by C30, C33, C44, and C47.

Belongs to the scaffold protein DUF35 family. In terms of assembly, interacts with acetoacetyl-CoA thiolase and HMG-CoA synthase (HMGCS) that catalyzes the first and second step in the mevalonate pathway, respectively.

Functions as a scaffold to connect the acetoacetyl-CoA thiolase and HMG-CoA synthase (HMGCS) dimers in the channeling thiolase/HMGCS complex, which allows for efficient coupling of the endergonic thiolase reaction with the exergonic HMGCS reaction. The sequence is that of DUF35 domain-containing scaffold protein from Methanocaldococcus jannaschii (strain ATCC 43067 / DSM 2661 / JAL-1 / JCM 10045 / NBRC 100440) (Methanococcus jannaschii).